The primary structure comprises 143 residues: Alpha-amylase/trypsin inhibitor CM16 (143 aa).

A signal peptide spans 1–24; it reads MASKSNCVLLLAAVLVSIFAAVAA.

It belongs to the protease inhibitor I6 (cereal trypsin/alpha-amylase inhibitor) family. In terms of assembly, subunit of the tetrameric inhibitor. Post-translationally, five disulfide bonds, which are essential for the inhibitor activity, are probably present. In terms of tissue distribution, developing endosperm.

The protein resides in the secreted. In terms of biological role, alpha-amylase/trypsin inhibitor. It could be involved in insect defense mechanisms. The sequence is that of Alpha-amylase/trypsin inhibitor CM16 from Triticum aestivum (Wheat).